Reading from the N-terminus, the 139-residue chain is MTNDSASHTPSDNTEMTEMQRYVTQQRGTEPAFSGKLLHNKRTGAYHCLCCQAPLFYSDSKYDSGCGWPSFDQPVSSEAVRYLEDESHNMRRIEIRCGQCDAHLGHVFPDGPKTTGERYCVNSASLSFIDDVDGERVDG.

A MsrB domain is found at 9–131 (TPSDNTEMTE…NSASLSFIDD (123 aa)). Zn(2+)-binding residues include C48, C51, C97, and C100. Catalysis depends on C120, which acts as the Nucleophile.

Belongs to the MsrB Met sulfoxide reductase family. Zn(2+) is required as a cofactor.

The catalysed reaction is L-methionyl-[protein] + [thioredoxin]-disulfide + H2O = L-methionyl-(R)-S-oxide-[protein] + [thioredoxin]-dithiol. This is Peptide methionine sulfoxide reductase MsrB from Pectobacterium atrosepticum (strain SCRI 1043 / ATCC BAA-672) (Erwinia carotovora subsp. atroseptica).